A 224-amino-acid polypeptide reads, in one-letter code: A-type ATP synthase subunit D (224 aa).

Positions 200-209 (KKVKDKKEAQ) are enriched in basic and acidic residues. Residues 200–224 (KKVKDKKEAQEEAADEAAAAESTGA) are disordered. Residues 215–224 (EAAAAESTGA) are compositionally biased toward low complexity.

It belongs to the V-ATPase D subunit family. Has multiple subunits with at least A(3), B(3), C, D, E, F, H, I and proteolipid K(x).

Its subcellular location is the cell membrane. Component of the A-type ATP synthase that produces ATP from ADP in the presence of a proton gradient across the membrane. The sequence is that of A-type ATP synthase subunit D from Halobacterium salinarum (strain ATCC 29341 / DSM 671 / R1).